Reading from the N-terminus, the 37-residue chain is Cytochrome b6-f complex subunit 5 (37 aa).

A helical membrane pass occupies residues 5–25 (LLSGIVLGLIPITLAGLFVTA).

This sequence belongs to the PetG family. As to quaternary structure, the 4 large subunits of the cytochrome b6-f complex are cytochrome b6, subunit IV (17 kDa polypeptide, PetD), cytochrome f and the Rieske protein, while the 4 small subunits are PetG, PetL, PetM and PetN. The complex functions as a dimer.

The protein localises to the plastid. It is found in the chloroplast thylakoid membrane. Its function is as follows. Component of the cytochrome b6-f complex, which mediates electron transfer between photosystem II (PSII) and photosystem I (PSI), cyclic electron flow around PSI, and state transitions. PetG is required for either the stability or assembly of the cytochrome b6-f complex. The sequence is that of Cytochrome b6-f complex subunit 5 from Chaetosphaeridium globosum (Charophycean green alga).